Reading from the N-terminus, the 347-residue chain is NADH-ubiquinone oxidoreductase chain 2 (347 aa).

10 helical membrane passes run Leu-4 to Met-21, Trp-26 to Leu-44, Tyr-59 to Leu-79, Leu-93 to Val-115, Leu-149 to Gly-169, Ile-178 to Pro-198, Leu-200 to Met-220, Ala-241 to Leu-261, Glu-274 to Met-294, and Thr-323 to Leu-343.

Belongs to the complex I subunit 2 family. As to quaternary structure, core subunit of respiratory chain NADH dehydrogenase (Complex I) which is composed of 45 different subunits. Interacts with TMEM242.

It localises to the mitochondrion inner membrane. It carries out the reaction a ubiquinone + NADH + 5 H(+)(in) = a ubiquinol + NAD(+) + 4 H(+)(out). Functionally, core subunit of the mitochondrial membrane respiratory chain NADH dehydrogenase (Complex I) which catalyzes electron transfer from NADH through the respiratory chain, using ubiquinone as an electron acceptor. Essential for the catalytic activity and assembly of complex I. The protein is NADH-ubiquinone oxidoreductase chain 2 of Cardioderma cor (Heart-nosed bat).